The primary structure comprises 199 residues: Probable nicotinate-nucleotide adenylyltransferase (199 aa).

The protein belongs to the NadD family.

The enzyme catalyses nicotinate beta-D-ribonucleotide + ATP + H(+) = deamido-NAD(+) + diphosphate. The protein operates within cofactor biosynthesis; NAD(+) biosynthesis; deamido-NAD(+) from nicotinate D-ribonucleotide: step 1/1. In terms of biological role, catalyzes the reversible adenylation of nicotinate mononucleotide (NaMN) to nicotinic acid adenine dinucleotide (NaAD). The polypeptide is Probable nicotinate-nucleotide adenylyltransferase (Chloroherpeton thalassium (strain ATCC 35110 / GB-78)).